Reading from the N-terminus, the 388-residue chain is Protochlorophyllide reductase A, chloroplastic (388 aa).

The N-terminal 74 residues, 1–74, are a transit peptide targeting the chloroplast; it reads MALQLLPSTL…KPSGKKTLRQ (74 aa).

This sequence belongs to the short-chain dehydrogenases/reductases (SDR) family. POR subfamily.

The protein resides in the plastid. Its subcellular location is the chloroplast. The enzyme catalyses chlorophyllide a + NADP(+) = protochlorophyllide a + NADPH + H(+). Its pathway is porphyrin-containing compound metabolism; chlorophyll biosynthesis. In terms of biological role, phototransformation of protochlorophyllide (Pchlide) to chlorophyllide (Chlide). This chain is Protochlorophyllide reductase A, chloroplastic (PORA), found in Triticum aestivum (Wheat).